The following is a 457-amino-acid chain: ATP synthase subunit beta (457 aa).

Residue 150–157 (GGAGVGKT) coordinates ATP.

The protein belongs to the ATPase alpha/beta chains family. In terms of assembly, F-type ATPases have 2 components, CF(1) - the catalytic core - and CF(0) - the membrane proton channel. CF(1) has five subunits: alpha(3), beta(3), gamma(1), delta(1), epsilon(1). CF(0) has three main subunits: a(1), b(2) and c(9-12). The alpha and beta chains form an alternating ring which encloses part of the gamma chain. CF(1) is attached to CF(0) by a central stalk formed by the gamma and epsilon chains, while a peripheral stalk is formed by the delta and b chains.

It localises to the cell membrane. It catalyses the reaction ATP + H2O + 4 H(+)(in) = ADP + phosphate + 5 H(+)(out). Functionally, produces ATP from ADP in the presence of a proton gradient across the membrane. The catalytic sites are hosted primarily by the beta subunits. The protein is ATP synthase subunit beta of Baumannia cicadellinicola subsp. Homalodisca coagulata.